Reading from the N-terminus, the 305-residue chain is Aspartate carbamoyltransferase catalytic subunit (305 aa).

Positions 56 and 57 each coordinate carbamoyl phosphate. Lys-85 provides a ligand contact to L-aspartate. Positions 106, 134, and 137 each coordinate carbamoyl phosphate. L-aspartate contacts are provided by Arg-167 and Arg-227. Carbamoyl phosphate-binding residues include Leu-266 and Pro-267.

This sequence belongs to the aspartate/ornithine carbamoyltransferase superfamily. ATCase family. As to quaternary structure, heterooligomer of catalytic and regulatory chains.

It catalyses the reaction carbamoyl phosphate + L-aspartate = N-carbamoyl-L-aspartate + phosphate + H(+). It functions in the pathway pyrimidine metabolism; UMP biosynthesis via de novo pathway; (S)-dihydroorotate from bicarbonate: step 2/3. Functionally, catalyzes the condensation of carbamoyl phosphate and aspartate to form carbamoyl aspartate and inorganic phosphate, the committed step in the de novo pyrimidine nucleotide biosynthesis pathway. This is Aspartate carbamoyltransferase catalytic subunit from Thermoplasma acidophilum (strain ATCC 25905 / DSM 1728 / JCM 9062 / NBRC 15155 / AMRC-C165).